The chain runs to 213 residues: High frequency lysogenization protein HflD homolog (213 aa).

Belongs to the HflD family.

It localises to the cytoplasm. Its subcellular location is the cell inner membrane. In Alcanivorax borkumensis (strain ATCC 700651 / DSM 11573 / NCIMB 13689 / SK2), this protein is High frequency lysogenization protein HflD homolog.